A 307-amino-acid chain; its full sequence is Putative lipid kinase SE_0507 (307 aa).

Residues 3–139 form the DAGKc domain; the sequence is QPYNHGVLFY…YDVLKVNDLY (137 aa). ATP contacts are provided by residues Ser-44, 74-80, and Thr-101; that span reads GDGTLNE. 3 residues coordinate Mg(2+): Ser-220, Asp-223, and Arg-225. Glu-281 acts as the Proton acceptor in catalysis.

It belongs to the diacylglycerol/lipid kinase family. Mg(2+) is required as a cofactor.

May catalyze the ATP-dependent phosphorylation of lipids other than diacylglycerol (DAG). This Staphylococcus epidermidis (strain ATCC 12228 / FDA PCI 1200) protein is Putative lipid kinase SE_0507.